The primary structure comprises 350 residues: Ion-translocating oxidoreductase complex subunit D (350 aa).

4 consecutive transmembrane segments (helical) span residues 36 to 56 (FYFF…IALL), 68 to 88 (PIIS…IGVS), 89 to 109 (IPSI…IVIV), and 120 to 140 (IFNP…VQMT). T185 is modified (FMN phosphoryl threonine). Transmembrane regions (helical) follow at residues 212–232 (GFGV…LAML), 239–259 (WQIS…GYLL), 265–285 (IGPL…FIAT), 291–311 (ATSV…VYVI), and 315–335 (GGYP…APFI).

Belongs to the NqrB/RnfD family. As to quaternary structure, the complex is composed of six subunits: RnfA, RnfB, RnfC, RnfD, RnfE and RnfG. The cofactor is FMN.

It localises to the cell inner membrane. Part of a membrane-bound complex that couples electron transfer with translocation of ions across the membrane. This Shewanella piezotolerans (strain WP3 / JCM 13877) protein is Ion-translocating oxidoreductase complex subunit D.